Consider the following 166-residue polypeptide: NADH-quinone oxidoreductase subunit E (166 aa).

[2Fe-2S] cluster is bound by residues C92, C97, C133, and C137.

Belongs to the complex I 24 kDa subunit family. As to quaternary structure, composed of 13 different subunits. Subunits NuoCD, E, F, and G constitute the peripheral sector of the complex. It depends on [2Fe-2S] cluster as a cofactor.

The enzyme catalyses a quinone + NADH + 5 H(+)(in) = a quinol + NAD(+) + 4 H(+)(out). NDH-1 shuttles electrons from NADH, via FMN and iron-sulfur (Fe-S) centers, to quinones in the respiratory chain. The immediate electron acceptor for the enzyme in this species is believed to be ubiquinone. Couples the redox reaction to proton translocation (for every two electrons transferred, four hydrogen ions are translocated across the cytoplasmic membrane), and thus conserves the redox energy in a proton gradient. The sequence is that of NADH-quinone oxidoreductase subunit E (nuoE) from Salmonella typhi.